The following is a 218-amino-acid chain: Thiopurine S-methyltransferase (218 aa).

Residues Trp-10, Leu-45, Glu-66, and Arg-123 each contribute to the S-adenosyl-L-methionine site.

This sequence belongs to the class I-like SAM-binding methyltransferase superfamily. TPMT family.

The protein localises to the cytoplasm. It catalyses the reaction S-adenosyl-L-methionine + a thiopurine = S-adenosyl-L-homocysteine + a thiopurine S-methylether.. This chain is Thiopurine S-methyltransferase, found in Shewanella loihica (strain ATCC BAA-1088 / PV-4).